The sequence spans 196 residues: Lipoprotein signal peptidase (196 aa).

3 consecutive transmembrane segments (helical) span residues 43-63, 75-95, and 100-120; these read LMLK…GISF, AVFI…MVCS, and GFAG…DRLF. Active-site residues include D126 and D144. Residues 135–155 traverse the membrane as a helical segment; sequence YSFPVFNLADCFITIGVIILI.

It belongs to the peptidase A8 family.

Its subcellular location is the cell inner membrane. It catalyses the reaction Release of signal peptides from bacterial membrane prolipoproteins. Hydrolyzes -Xaa-Yaa-Zaa-|-(S,diacylglyceryl)Cys-, in which Xaa is hydrophobic (preferably Leu), and Yaa (Ala or Ser) and Zaa (Gly or Ala) have small, neutral side chains.. It functions in the pathway protein modification; lipoprotein biosynthesis (signal peptide cleavage). In terms of biological role, this protein specifically catalyzes the removal of signal peptides from prolipoproteins. This chain is Lipoprotein signal peptidase, found in Rickettsia canadensis (strain McKiel).